A 131-amino-acid chain; its full sequence is MSSEQLHEPAELLSEETKNMHRALVTLIEELEAVDWYQQRADACSEPGLHDVLIHNKNEEVEHAMMTLEWIRRRSPVFDAHMRTYLFTERPILELEEEDTGSSSSVAASPTSAPSHGSLGIGSLRQEGKED.

Fe cation is bound by residues Glu30, Glu60, and His63. Positions 96–131 are disordered; the sequence is EEEDTGSSSSVAASPTSAPSHGSLGIGSLRQEGKED. The tract at residues 98–131 is targeting peptide; sequence EDTGSSSSVAASPTSAPSHGSLGIGSLRQEGKED. A compositionally biased stretch (low complexity) spans 102–115; the sequence is SSSSVAASPTSAPS.

It belongs to the ferritin-like superfamily. EncFtn family. As to quaternary structure, forms dimers at all pH tested; under acidic conditions formes decamers. The N-terminal domain (residues 1-97) crystallizes as a decameric ring. Four decamers are loaded in the encapsulin nanocompartment in a tetrahedral arrangement. A 3 nm gap is consistently seen between the shell and the cargo. The target peptide extends away from the decameric ring, to allow binding to the interior of the encapsulin nanocompartment shell.

It localises to the encapsulin nanocompartment. The enzyme catalyses 4 Fe(2+) + O2 + 4 H(+) = 4 Fe(3+) + 2 H2O. Its activity is regulated as follows. The ferroxidase activity is inhibited by zinc. In terms of biological role, cargo protein of a type 1 encapsulin nanocompartment. A ferritin-like ferroxidase that converts Fe(2+) to Fe(3+) iron inside the encapsulin nanocompartment. Mineralized Fe(3+) is released to the exterior of the decameric complex for deposition in the encapsulin nanocompartment. In solution the decamer binds 10-15 iron cations; in the encapsulin nanocompartment the decamer can bind up to 48 ions, perhaps via its internal channel, and on its exterior. The cargo-loaded nanocompartment maximally sequesters up to 4150 Fe ions. This Haliangium ochraceum (strain DSM 14365 / JCM 11303 / SMP-2) protein is Encapsulated ferritin-like protein.